We begin with the raw amino-acid sequence, 1376 residues long: Zinc finger MYM-type protein 2 (1376 aa).

Residues 30-53 (NVGNSFSGPPNPLVSRSSKFQNSS) are compositionally biased toward polar residues. 2 disordered regions span residues 30-56 (NVGNSFSGPPNPLVSRSSKFQNSSVED) and 85-158 (TSSK…FSSS). Glycyl lysine isopeptide (Lys-Gly) (interchain with G-Cter in SUMO2) cross-links involve residues Lys48, Lys88, Lys98, and Lys104. Residues 127–138 (TNQGQEKSSSNF) are compositionally biased toward polar residues. The span at 139–152 (IERRPSETKNRTND) shows a compositional bias: basic and acidic residues. Residues Lys147, Lys253, and Lys297 each participate in a glycyl lysine isopeptide (Lys-Gly) (interchain with G-Cter in SUMO2) cross-link. The disordered stretch occupies residues 269–304 (DVFQNGESAPHHNPDSWISQSASFPRNQKQQGVDSL). Residues 284–302 (SWISQSASFPRNQKQQGVD) are compositionally biased toward polar residues. Ser305 carries the phosphoserine modification. Glycyl lysine isopeptide (Lys-Gly) (interchain with G-Cter in SUMO2) cross-links involve residues Lys312, Lys324, Lys347, and Lys365. The MYM-type 1 zinc finger occupies 326–362 (VKVTCANCKKPLQKGQTAYQRKGSAHLFCSTTCLSSF). The MYM-type 2 zinc finger occupies 368–408 (PKKLCVMCKKDITTMKGTIVAQVDSSESFQEFCSTSCLSLY). Glycyl lysine isopeptide (Lys-Gly) (interchain with G-Cter in SUMO2) cross-links involve residues Lys416, Lys440, Lys490, Lys502, Lys512, Lys528, and Lys531. MYM-type zinc fingers lie at residues 420-455 (NKSRCTICGKLTEIRHEVSFKNMTHKLCSDHCFNRY) and 462-501 (IMNCCEQCGEYLPSKGAGNNVLVVDGQQKRFCCQSCVTEY). An MYM-type 5 zinc finger spans residues 532-569 (LTTCTGCRTQCRFFDMTQCIGPNGYMEPYCSTACMNSH). Glycyl lysine isopeptide (Lys-Gly) (interchain with G-Cter in SUMO2) cross-links involve residues Lys575, Lys602, Lys648, Lys657, Lys687, Lys699, and Lys708. The MYM-type 6 zinc-finger motif lies at 635 to 670 (QLKCNYCKNSFCSKPEILEWENKVHQFCSKTCSDDY). MYM-type zinc fingers lie at residues 722-757 (RCVTCNYCSQLCKKGATKELDGVVRDFCSEDCCKKF) and 763-798 (KAARCDCCKSQGTLKERVQWRGEMKHFCDQHCLLRF). Glycyl lysine isopeptide (Lys-Gly) (interchain with G-Cter in SUMO2) cross-links involve residues Lys763, Lys787, Lys811, and Lys828. At Ser837 the chain carries Phosphoserine. A disordered region spans residues 1027–1063 (VFGEEYEEQPRPRSKKKGTKRKAVSGYQSHDDSSDNS). A compositionally biased stretch (basic residues) spans 1038 to 1049 (PRSKKKGTKRKA). Ser1063 is subject to Phosphoserine. Thr1375 carries the post-translational modification Phosphothreonine.

In terms of assembly, can form homodimers. May be a component of a BHC histone deacetylase complex that contains HDAC1, HDAC2, HMG20B/BRAF35, KDM1A, RCOR1/CoREST, PHF21A/BHC80, ZMYM2, ZNF217, ZMYM3, GSE1 and GTF2I. Interacts with FOXP1 and FOXP2. Low but widespread expression is detected in the developing kidney.

It is found in the nucleus. Functionally, involved in the negative regulation of transcription. In Mus musculus (Mouse), this protein is Zinc finger MYM-type protein 2 (Zmym2).